We begin with the raw amino-acid sequence, 414 residues long: MASSAGLALCGHALVVRGGSRLLATSTSSSDGDSLFIYDCSAAEKKSQENKGEDGQPVDQGSDTVLASTFSKSGSYFVLTDDSKRLILFRTNPWQCLSVRTVVRRCTALTFTASEEKILVADKSGDVYSFSVLEPHGGGRLELGHLSMLLDVAVSPDDRFVLTADRDEKIRVSWAAAPHSIESFCLGHTEFVSRIFVVPNHPELLLSSSGDCTLRLWEYRSGRELHCCPLTSLQEPTEPWSDKRFAVSRITYWSQEDCVALSCDGLPVVYIFQLDAAQRQLVPRQLLTFQHRVWDAAFEEGHGLWVLQDCREDPLVLYRPVGGQWQSAPESAELRRVCAHVRVNWAMLEGCAGVDSGFSSLYKATCDNMTTYLKKKEERLQQQLEKKRRQAPPPGPNGPTKKMRAGELAQGCSS.

An N-acetylalanine modification is found at Ala-2. 4 WD repeats span residues 60 to 99, 101 to 140, 144 to 184, and 187 to 227; these read QGSD…CLSV, TVVR…GGGR, GHLS…IESF, and GHTE…ELHC. The disordered stretch occupies residues 377–414; the sequence is EERLQQQLEKKRRQAPPPGPNGPTKKMRAGELAQGCSS.

It belongs to the WD repeat TRM82 family. As to quaternary structure, non-catalytic component of the METTL1-WDR4 complex, composed of METTL1 and WDR4. Interacts with FEN1; the interaction is direct.

Its subcellular location is the nucleus. It is found in the chromosome. Its pathway is tRNA modification; N(7)-methylguanine-tRNA biosynthesis. Its function is as follows. Non-catalytic component of the METTL1-WDR4 methyltransferase complex required for the formation of N(7)-methylguanine in a subset of RNA species, such as tRNAs, mRNAs and microRNAs (miRNAs). In the METTL1-WDR4 methyltransferase complex, WDR4 acts as a scaffold for tRNA-binding. Required for the formation of N(7)-methylguanine at position 46 (m7G46) in a large subset of tRNAs that contain the 5'-RAGGU-3' motif within the variable loop. M7G46 interacts with C13-G22 in the D-loop to stabilize tRNA tertiary structure and protect tRNAs from decay. Also required for the formation of N(7)-methylguanine at internal sites in a subset of mRNAs. Also required for methylation of a specific subset of miRNAs, such as let-7. Independently of METTL1, also plays a role in genome stability: localizes at the DNA replication site and regulates endonucleolytic activities of FEN1. In Bos taurus (Bovine), this protein is tRNA (guanine-N(7)-)-methyltransferase non-catalytic subunit WDR4.